The chain runs to 94 residues: MVKRKNSDNSGTVAQGNYEAKVAEIEAIISRIESGELELETVFEQFANAVQYLRQCDTFLQQRQQQIDLLIETLNEQDGDQIPRVSNDGIEPKK.

Belongs to the XseB family. In terms of assembly, heterooligomer composed of large and small subunits.

The protein resides in the cytoplasm. The catalysed reaction is Exonucleolytic cleavage in either 5'- to 3'- or 3'- to 5'-direction to yield nucleoside 5'-phosphates.. In terms of biological role, bidirectionally degrades single-stranded DNA into large acid-insoluble oligonucleotides, which are then degraded further into small acid-soluble oligonucleotides. This is Exodeoxyribonuclease 7 small subunit from Trichormus variabilis (strain ATCC 29413 / PCC 7937) (Anabaena variabilis).